The chain runs to 284 residues: Protoheme IX farnesyltransferase (284 aa).

9 consecutive transmembrane segments (helical) span residues valine 13 to proline 33, leucine 35 to leucine 55, phenylalanine 84 to isoleucine 104, leucine 106 to tryptophan 126, asparagine 134 to alanine 154, valine 163 to leucine 183, valine 205 to valine 225, methionine 229 to tyrosine 249, and phenylalanine 264 to isoleucine 284.

It belongs to the UbiA prenyltransferase family. Protoheme IX farnesyltransferase subfamily.

The protein resides in the cell inner membrane. It catalyses the reaction heme b + (2E,6E)-farnesyl diphosphate + H2O = Fe(II)-heme o + diphosphate. The protein operates within porphyrin-containing compound metabolism; heme O biosynthesis; heme O from protoheme: step 1/1. Converts heme B (protoheme IX) to heme O by substitution of the vinyl group on carbon 2 of heme B porphyrin ring with a hydroxyethyl farnesyl side group. The polypeptide is Protoheme IX farnesyltransferase (Leptospira biflexa serovar Patoc (strain Patoc 1 / Ames)).